The primary structure comprises 173 residues: Shikimate kinase 1 (173 aa).

14–19 (GAGKST) is a binding site for ATP. Serine 18 is a binding site for Mg(2+). Residues aspartate 36, arginine 60, and glycine 82 each coordinate substrate. Arginine 120 provides a ligand contact to ATP. Position 140 (arginine 140) interacts with substrate. Glutamine 157 is a binding site for ATP.

Belongs to the shikimate kinase family. As to quaternary structure, monomer. Mg(2+) is required as a cofactor.

It is found in the cytoplasm. It carries out the reaction shikimate + ATP = 3-phosphoshikimate + ADP + H(+). It participates in metabolic intermediate biosynthesis; chorismate biosynthesis; chorismate from D-erythrose 4-phosphate and phosphoenolpyruvate: step 5/7. In terms of biological role, catalyzes the specific phosphorylation of the 3-hydroxyl group of shikimic acid using ATP as a cosubstrate. The sequence is that of Shikimate kinase 1 from Enterobacter sp. (strain 638).